The following is a 1374-amino-acid chain: DNA-directed RNA polymerase subunit beta' (1374 aa).

Residues 1–47 are disordered; that stretch reads MTSTSPKSRKPSTKTTKSKSKSKSKSKAAKAAAASASPALARTPPQF. The span at 7–28 shows a compositional bias: basic residues; sequence KSRKPSTKTTKSKSKSKSKSKA. Residues 29–45 show a composition bias toward low complexity; that stretch reads AKAAAASASPALARTPP. Cys258, Cys325, Cys332, and Cys335 together coordinate Zn(2+). The tract at residues 1343–1374 is disordered; sequence VRPTGENELEEEQLPDPSALEGLQQEGLLTEE. A compositionally biased stretch (low complexity) spans 1362-1374; it reads LEGLQQEGLLTEE.

The protein belongs to the RNA polymerase beta' chain family. RpoC2 subfamily. In terms of assembly, in cyanobacteria the RNAP catalytic core is composed of 2 alpha, 1 beta, 1 beta', 1 gamma and 1 omega subunit. When a sigma factor is associated with the core the holoenzyme is formed, which can initiate transcription. Zn(2+) is required as a cofactor.

The enzyme catalyses RNA(n) + a ribonucleoside 5'-triphosphate = RNA(n+1) + diphosphate. Functionally, DNA-dependent RNA polymerase catalyzes the transcription of DNA into RNA using the four ribonucleoside triphosphates as substrates. This chain is DNA-directed RNA polymerase subunit beta', found in Prochlorococcus marinus (strain MIT 9303).